Here is a 131-residue protein sequence, read N- to C-terminus: Large ribosomal subunit protein bL12 (131 aa).

This sequence belongs to the bacterial ribosomal protein bL12 family. As to quaternary structure, homodimer. Part of the ribosomal stalk of the 50S ribosomal subunit. Forms a multimeric L10(L12)X complex, where L10 forms an elongated spine to which 2 to 4 L12 dimers bind in a sequential fashion. Binds GTP-bound translation factors.

Functionally, forms part of the ribosomal stalk which helps the ribosome interact with GTP-bound translation factors. Is thus essential for accurate translation. This Prochlorococcus marinus (strain NATL1A) protein is Large ribosomal subunit protein bL12.